A 909-amino-acid polypeptide reads, in one-letter code: MADPSQASFWAQANALLRKNLTYQRRHIWTNIRLVLVPLLLCLFLLGIQLLLDVVVNKAADLTKCGSQDDFSIGDCPIPNPPLLPPLLQIPEPESRAVSGGFFSYNDLPDKSCRKTGTCPVTILLTGNNHSLGQALSGNMFGGSFAVNSSDLLSSLAYNVLGSTLALGTNNYADPGIESDFPIYSIQSQCSPNSTWPLSFGKIHTAVTCLQGLSLWRNNSVEVNDELFKGNWKGNPERMTNEIAAAYDLLNTDRNNFDVTIWYNSTNIDDPSRAPLVRVPRLLNLVSNAYLKFLKGPGTRILFEFVKEVPKHQTKFNLDIASMLGPLFFTWVVLLLFPVILTSLVYEKQERLRIIMKMHGLGIGPYWMISYAYFLTLSMFYVISLVIFGSAIGLRYFRLNDYSVQFIFYFIFVNLQISFAFLASSIFSKVKTATVVAYTLVFASGLLGMFLFGELLESPTFPEKGILALELYPGFSLFRGLYEFAQYASRGNGMKWKDLKESGMDKLFYLMSVEWFVILIVAYSIDLLSSSGRSPFVFFKKSSSLPSPSVQRQNSENVLIDMEKTDVTQEREKVEKLRKEGTTGHAIVCDNLKKVYPGSDGNPPKLAVRGLYLDVPSGECFGMLGPNGAGKTSFINMMTGLLKPTSGTALVQGLDICKDMNKVYTSMGVCPQHDLLWGTLTGREHLLFYGRLKNIKGSALMQAVEESLKSVSLFDGGVADKPAGKYSGGMKRRLSVAISLIGNPKVVYMDEPSTGLDPASRKDLWTVIQRAKQNTAIILTTHSMEEAEFLCDRLGIFVDGGLQCVGNPKELKGRYGGSYVFTMTTSVEHEEKVERMVKHISPNSKRVYHLAGTQKFEIPKQEVMIADVFFMVEKVKSKFTVFAWGLADTTLEDVFFKVATTAQAFNSLS.

The next 7 helical transmembrane spans lie at Val35–Val55, Ile320–Ile340, Phe374–Leu394, Phe406–Ile426, Ala433–Gly453, Gly465–Ala485, and Leu507–Leu527. Ser555 carries the phosphoserine modification. The 238-residue stretch at Ile587–Thr824 folds into the ABC transporter domain. Gly625–Thr632 serves as a coordination point for ATP.

It belongs to the ABC transporter superfamily. ABCA family. CPR flippase (TC 3.A.1.211) subfamily.

It localises to the membrane. This is ABC transporter A family member 10 (ABCA10) from Arabidopsis thaliana (Mouse-ear cress).